The sequence spans 253 residues: Putative ankyrin repeat protein NMB1133/NMB1171 (253 aa).

ANK repeat units follow at residues 196-225 and 229-252; these read DGYT…NPAS and EGYT…LEPR.

The sequence is that of Putative ankyrin repeat protein NMB1133/NMB1171 from Neisseria meningitidis serogroup B (strain ATCC BAA-335 / MC58).